We begin with the raw amino-acid sequence, 1024 residues long: Hemolysin, plasmid (1024 aa).

Positions 20-32 are enriched in polar residues; it reads AANKLHSAGQSTK. The disordered stretch occupies residues 20 to 39; the sequence is AANKLHSAGQSTKDALKKAA. 3 consecutive transmembrane segments (helical) span residues 238 to 260, 268 to 327, and 365 to 411; these read IGAG…ILSN, KAAA…LSIA, and DASL…GILE. N6-myristoyl lysine attachment occurs at residues Lys-564 and Lys-690. Hemolysin-type calcium-binding repeat units lie at residues 732–749, 750–767, 768–785, 786–803, 816–833, and 834–851; these read FGSK…DDLI, EGND…NDTL, SGGN…NDKL, IGVA…DDEF, FGGK…ADLL, and DGGE…NDIY.

The protein belongs to the RTX prokaryotic toxin (TC 1.C.11) family. Myristoylated by HlyC; the toxin only becomes active when modified. Mainly myristoylated, while a minor fraction is acylated with pentadecanoyl (C15:0; 26%) and heptadecanoyl (C17:0; 6%) fatty acyl groups. Fatty acylation is involved in binding to host membranes and promotes the irreversible insertion of Hemolysin into the host cell membrane. Can be activated by both myristoylation and palmitoylation, but HlyC catalyzes lysine myristoylation.

The protein resides in the secreted. It is found in the host cell membrane. In terms of biological role, bacterial hemolysins are exotoxins that attack blood cell membranes and cause cell rupture by forming a pore. The chain is Hemolysin, plasmid from Escherichia coli.